The sequence spans 231 residues: MAKVAKRIQKIREGVDPNKLYVLTDAISMVKERAVAKFDETVEVSMNLGVDPRHADQMVRGVVNLPNGTGRDVRVAVFARGVKADEATAAGADVVGAEELVEIVQGGKIDFDRCIATPDMMPLVGRLGKVLGPRGMMPNPKVGTVTMDVAGAVKASKGGAVEFRVEKAGIVHAGIGKASFDAKALEENIKAFADAVIKAKPTGAKGNYVKRVAISSTMGPGVKIEPSSVTA.

It belongs to the universal ribosomal protein uL1 family. As to quaternary structure, part of the 50S ribosomal subunit.

Binds directly to 23S rRNA. The L1 stalk is quite mobile in the ribosome, and is involved in E site tRNA release. In terms of biological role, protein L1 is also a translational repressor protein, it controls the translation of the L11 operon by binding to its mRNA. This Agrobacterium fabrum (strain C58 / ATCC 33970) (Agrobacterium tumefaciens (strain C58)) protein is Large ribosomal subunit protein uL1.